A 203-amino-acid polypeptide reads, in one-letter code: Flagellar transcriptional regulator FlhC (203 aa).

Positions 161, 164, 181, and 184 each coordinate Zn(2+).

The protein belongs to the FlhC family. As to quaternary structure, heterohexamer composed of two FlhC and four FlhD subunits. Each FlhC binds a FlhD dimer, forming a heterotrimer, and a hexamer assembles by dimerization of two heterotrimers. Zn(2+) serves as cofactor.

Its subcellular location is the cytoplasm. Functions in complex with FlhD as a master transcriptional regulator that regulates transcription of several flagellar and non-flagellar operons by binding to their promoter region. Activates expression of class 2 flagellar genes, including fliA, which is a flagellum-specific sigma factor that turns on the class 3 genes. Also regulates genes whose products function in a variety of physiological pathways. In Cupriavidus necator (strain ATCC 17699 / DSM 428 / KCTC 22496 / NCIMB 10442 / H16 / Stanier 337) (Ralstonia eutropha), this protein is Flagellar transcriptional regulator FlhC.